We begin with the raw amino-acid sequence, 64 residues long: Kappa-lycotoxin-Os1a (64 aa).

4 cysteine pairs are disulfide-bonded: C10–C26, C17–C56, C19–C42, and C28–C40.

Belongs to the neurotoxin 04 (omega-agtx) family. 01 (type I omega-agtx) subfamily. As to expression, expressed by the venom gland.

Its subcellular location is the secreted. In terms of biological role, insecticidal to house crickets. It induces an excitatory slow-onset impact that leads to irreversible spastic paralysis. It also modifies human voltage-gated potassium channel Kv1.5/KCNA5. Most likely, it binds to the voltage-sensing domain of the channel, suggesting it does not block the pore but prevents its opening at physiological membrane potentials. The recombinant peptide binds to the channel in an irreversible manner and slows down the hKv1.5 current activation kinetics. It is not toxic to mice, when intracranially injected (at 0.5 ug/g mouse). The protein is Kappa-lycotoxin-Os1a of Oculicosa supermirabilis (Central Asian wolf-spider).